Consider the following 510-residue polypeptide: ATP synthase subunit alpha (510 aa).

169–176 (GDRQTGKT) contacts ATP.

It belongs to the ATPase alpha/beta chains family. In terms of assembly, F-type ATPases have 2 components, CF(1) - the catalytic core - and CF(0) - the membrane proton channel. CF(1) has five subunits: alpha(3), beta(3), gamma(1), delta(1), epsilon(1). CF(0) has three main subunits: a(1), b(2) and c(9-12). The alpha and beta chains form an alternating ring which encloses part of the gamma chain. CF(1) is attached to CF(0) by a central stalk formed by the gamma and epsilon chains, while a peripheral stalk is formed by the delta and b chains.

It is found in the cell inner membrane. It catalyses the reaction ATP + H2O + 4 H(+)(in) = ADP + phosphate + 5 H(+)(out). Produces ATP from ADP in the presence of a proton gradient across the membrane. The alpha chain is a regulatory subunit. In Afipia carboxidovorans (strain ATCC 49405 / DSM 1227 / KCTC 32145 / OM5) (Oligotropha carboxidovorans), this protein is ATP synthase subunit alpha.